The following is a 1061-amino-acid chain: Ribonuclease E (1061 aa).

The 81-residue stretch at 39-119 (ANIYKGKITR…GNKGAALTTF (81 aa)) folds into the S1 motif domain. Residues 57 to 112 (FVDYGAERHGFLPLKEIAREYFPANYSAHGRPNIKDVLREGQEVIVQIDKEERGNK) form an interaction with RNA region. The tract at residues 169-170 (RT) is interaction with RNA 5'-terminal monophosphate. 2 residues coordinate Mg(2+): Asp-303 and Asp-346. Zn(2+) contacts are provided by Cys-404 and Cys-407. The required for zinc-mediated homotetramerization and catalytic activity stretch occupies residues 404 to 407 (CPRC). Disordered regions lie at residues 532–565 (FAMP…PAAP), 586–731 (EETK…KVRY), and 752–822 (EPIV…RYPT). Residues 536-546 (DVPPAPTPAEP) are compositionally biased toward pro residues. Residues 547 to 565 (AAPVVAPAPKAAPATPAAP) show a composition bias toward low complexity. Basic and acidic residues-rich tracts occupy residues 598-608 (AEAKPERQQDR), 615-640 (NRRD…EENR), and 652-690 (ETRE…KRQA). Basic residues predominate over residues 796-814 (RRSRRSPRHLRVSGQRRRR). An interaction with enolase region spans residues 833–850 (ASPELASGKVWIRYPIVR). Residues 1021-1061 (EAPRHSDWQRPTFAFEGKGAAGGHTATHHASAAPARPQPVE) are interaction with PNPase. Positions 1031 to 1061 (PTFAFEGKGAAGGHTATHHASAAPARPQPVE) are disordered. Positions 1043-1055 (GHTATHHASAAPA) are enriched in low complexity.

The protein belongs to the RNase E/G family. RNase E subfamily. As to quaternary structure, component of the RNA degradosome, which is a multiprotein complex involved in RNA processing and mRNA degradation. Within the RNA degradosome, RNase E assembles into a homotetramer formed by a dimer of dimers. Tetramerization is essential for catalytic activity, but not for RNA-binding. Interacts with RhlB, PNPase (pnp) and enolase (eno). Interacts with DeaD at reduced temperature. It depends on Zn(2+) as a cofactor. Mg(2+) serves as cofactor.

It localises to the cytoplasm. The protein localises to the cell inner membrane. The catalysed reaction is Endonucleolytic cleavage of single-stranded RNA in A- and U-rich regions.. With respect to regulation, the presence of a 5'-monophosphate on substrate RNA accelerates its cleavage by catalytically activating the enzyme. Binding to the membrane stabilizes protein structure and increases affinity for the substrate. In terms of biological role, endoribonuclease that plays a central role in RNA processing and decay. Required for the maturation of 5S and 16S rRNAs and the majority of tRNAs. Also involved in the degradation of most mRNAs. Can also process other RNA species, such as RNAI, a molecule that controls the replication of ColE1 plasmid, and the cell division inhibitor DicF-RNA. It initiates the decay of RNAs by cutting them internally near their 5'-end. It is able to remove poly(A) tails by an endonucleolytic process. Required to initiate rRNA degradation during both starvation and quality control; acts after RNase PH (rph) exonucleolytically digests the 3'-end of the 16S rRNA. Degradation of 16S rRNA leads to 23S rRNA degradation. Processes the 3 tRNA(Pro) precursors immediately after the 3'-CCA to generate the mature ends. Functionally, prefers 5'-monophosphorylated substrates over 5'-triphosphorylated substrates. 5'-monophosphate-assisted cleavage requires at least 2 and preferably 3 or more unpaired 5'-terminal nucleotides. The optimal spacing between the 5' end and the scissile phosphate appears to be 8 nucleotides. Any sequence of unpaired nucleotides at the 5'-end is tolerated. This is Ribonuclease E from Escherichia coli (strain K12).